Consider the following 308-residue polypeptide: Porphobilinogen deaminase (308 aa).

An S-(dipyrrolylmethanemethyl)cysteine modification is found at Cys-241.

The protein belongs to the HMBS family. Monomer. It depends on dipyrromethane as a cofactor.

It carries out the reaction 4 porphobilinogen + H2O = hydroxymethylbilane + 4 NH4(+). Its pathway is porphyrin-containing compound metabolism; protoporphyrin-IX biosynthesis; coproporphyrinogen-III from 5-aminolevulinate: step 2/4. Tetrapolymerization of the monopyrrole PBG into the hydroxymethylbilane pre-uroporphyrinogen in several discrete steps. The polypeptide is Porphobilinogen deaminase (Staphylococcus saprophyticus subsp. saprophyticus (strain ATCC 15305 / DSM 20229 / NCIMB 8711 / NCTC 7292 / S-41)).